The sequence spans 391 residues: MGAVPGVVLLLMLAVLGIRAAPAPEECHKLTKPVLKADVQNVSGDWVLVWSVANTTERWICENLTSSYVEFKLHSDIIEYTERNLFLGNSCISFYSNLSASTEKQQQFSLNNLQMEEKGVVRPFNDNGTVKFFETCVDCLSMEYSGDIGRFLLIYRRDGVHQNVEVLKAARDESQKLAECLGFSIDEPFIYDGVSDFCHKKSPEECHKLTKPVTKADVQSVSGDWVLVWSVAENISTSNEWTKLKSSHVELRIHSGVIVLNERNMLKNNSCMTFKTNMTAGPESQNTFIYTSGKMEENGVDKELDENGTVKFFETCADCLSIDYSGLFGHVLFVYRRDGVHQNVEVLKAAQDESQKLAECLGFSIGEPFIYDGVSDFCHKKSSPEVKPEQD.

Positions 1 to 20 (MGAVPGVVLLLMLAVLGIRA) are cleaved as a signal peptide. Repeat copies occupy residues 24 to 202 (PEEC…HKKS) and 203 to 391 (PEEC…PEQD). Residues asparagine 41, asparagine 54, asparagine 63, asparagine 97, asparagine 234, asparagine 268, asparagine 277, and asparagine 307 are each glycosylated (N-linked (GlcNAc...) asparagine).

Homodimer or heterodimer of PSTBP1 and PSTBP2. Glycosylated.

It localises to the secreted. Its function is as follows. Binds both saxitoxin and tetradotoxin. May play a role in toxin accumulation and/or excretion. In Takifugu pardalis (Panther puffer), this protein is Saxitoxin and tetrodotoxin-binding protein 2 (psbp2).